A 470-amino-acid polypeptide reads, in one-letter code: Zinc finger protein weckle (470 aa).

The interval 1-103 (MGVPTSDWIY…DALRLEYGLP (103 aa)) is required for homodimerization. Positions 10–82 (YWCRLCARDD…SKVQAIFELL (73 aa)) constitute a ZAD domain. Cys12, Cys15, Cys55, and Cys58 together coordinate Zn(2+). Residues 156–265 (NSDPKVLASP…LSMSPHGSQS (110 aa)) are disordered. Ser168 carries the phosphoserine modification. Residues 195–208 (ESDDEEAILDEDEA) are compositionally biased toward acidic residues. Residues 214-225 (LKRKRGRPKGSG) show a composition bias toward basic residues. A compositionally biased stretch (basic and acidic residues) spans 237–254 (TSREPDDNAKSKQDDKTS). Over residues 255–265 (ELSMSPHGSQS) the composition is skewed to polar residues. C2H2-type zinc fingers lie at residues 271 to 294 (YPCKICNETFMSFMALRRHKHDMH), 300 to 322 (YVCDHCGKGLKTFTSLVEHQLVH), 328 to 350 (CICPVCNAGFKNKARLRVHSQTH), 355 to 377 (FECNVCGKKLQTRAILNKHKYVH), 383 to 405 (FKCEVCGSGCKNSTALKIHLLGH), and 411 to 434 (YVCKYCGKAFASNTNCRSHKWKKH).

In terms of assembly, homodimer. Interacts with Myd88 and Toll.

The protein localises to the cell membrane. Acts as an adapter to assemble/stabilize a Toll/wek/Myd88/tube complex; required for efficient recruitment of Myd88 to Toll. Dispensable for innate immune response; plays a minimal role, if any, in the immune defense against Gram-positive bacteria and fungi. Involved in dorsoventral axis determination. This Drosophila melanogaster (Fruit fly) protein is Zinc finger protein weckle.